We begin with the raw amino-acid sequence, 328 residues long: 4-hydroxy-2-oxoglutarate aldolase, mitochondrial (328 aa).

The N-terminal 26 residues, 1 to 26, are a transit peptide targeting the mitochondrion; that stretch reads MFGRTLFPARVIALGSGLFRTPLRTL. Position 76–77 (76–77) interacts with substrate; the sequence is SN. Lys195 (schiff-base intermediate with substrate) is an active-site residue. 2 residues coordinate substrate: Ser197 and Gly221.

The protein belongs to the DapA family. As to quaternary structure, homotetramer.

It localises to the mitochondrion. It catalyses the reaction (4S)-4-hydroxy-2-oxoglutarate = glyoxylate + pyruvate. The enzyme catalyses (4R)-4-hydroxy-2-oxoglutarate = glyoxylate + pyruvate. Its activity is regulated as follows. Inhibited by divalent cations. In terms of biological role, catalyzes the final step in the metabolic pathway of hydroxyproline. This is 4-hydroxy-2-oxoglutarate aldolase, mitochondrial (hoga1) from Xenopus tropicalis (Western clawed frog).